The primary structure comprises 325 residues: Peroxidase 47 (325 aa).

The N-terminal stretch at 1–36 (MLTRFKKQNNKMVRANIVSMVLLMHAIVGFPFHARG) is a signal peptide. Disulfide bonds link Cys46–Cys125, Cys79–Cys84, Cys131–Cys321, and Cys209–Cys235. Catalysis depends on His77, which acts as the Proton acceptor. Ca(2+) is bound by residues Asp78, Gly83, Asp85, and Ser87. Pro172 lines the substrate pocket. Asn177 is a glycosylation site (N-linked (GlcNAc...) asparagine). His202 contacts heme b. Thr203 is a binding site for Ca(2+). Residues Asp246, Thr248, and Asp253 each contribute to the Ca(2+) site.

This sequence belongs to the peroxidase family. Classical plant (class III) peroxidase subfamily. It depends on heme b as a cofactor. Ca(2+) serves as cofactor.

It localises to the secreted. The enzyme catalyses 2 a phenolic donor + H2O2 = 2 a phenolic radical donor + 2 H2O. Its function is as follows. Removal of H(2)O(2), oxidation of toxic reductants, biosynthesis and degradation of lignin, suberization, auxin catabolism, response to environmental stresses such as wounding, pathogen attack and oxidative stress. These functions might be dependent on each isozyme/isoform in each plant tissue. The polypeptide is Peroxidase 47 (PER47) (Arabidopsis thaliana (Mouse-ear cress)).